Reading from the N-terminus, the 241-residue chain is Phosphatidylglycerophosphatase B (241 aa).

A helical membrane pass occupies residues 1–21 (MFKRLSLYTLLLCLVPFFIWG). The Periplasmic portion of the chain corresponds to 22–52 (ISYQWHGNSQLTQADYWLYLLTETGSVPYAL). Residues 53 to 62 (ITCVLFTLLF) traverse the membrane as a helical segment. Residues 63 to 67 (AFLFK) lie on the Cytoplasmic side of the membrane. The helical transmembrane segment at 68–91 (NPKQWILGVIVMGISVIATQAAKT) threads the bilayer. The Periplasmic portion of the chain corresponds to 92–158 (GAKALFEEPR…ENETGYSFPS (67 aa)). Positions 94-102 (KALFEEPRP) are phosphatase sequence motif I. The segment at 157-160 (PSGH) is phosphatase sequence motif II. The helical transmembrane segment at 159 to 173 (GHTIFAATWLMLAVG) threads the bilayer. The active-site Proton donor; for a subset of substrates is the H160. Residues 174 to 184 (FTQLLGNRSFK) lie on the Cytoplasmic side of the membrane. The helical transmembrane segment at 185–204 (AKLLVVGIAVWGLLMLISRV) threads the bilayer. Residues 202 to 213 (SRVRLGMHYPID) are phosphatase sequence motif III. Topologically, residues 205–210 (RLGMHY) are periplasmic. H209 serves as the catalytic Nucleophile. Residues 211–235 (PIDLLVATLLAWLINSIIFAFLKKK) traverse the membrane as a helical segment. Residues 236–241 (AIFVMK) are Cytoplasmic-facing.

It belongs to the PA-phosphatase related phosphoesterase family.

It is found in the cell inner membrane. The protein resides in the cell outer membrane. The catalysed reaction is a 1,2-diacyl-sn-glycero-3-phospho-(1'-sn-glycero-3'-phosphate) + H2O = a 1,2-diacyl-sn-glycero-3-phospho-(1'-sn-glycerol) + phosphate. It carries out the reaction a 1,2-diacyl-sn-glycerol 3-diphosphate + H2O = a 1,2-diacyl-sn-glycero-3-phosphate + phosphate + H(+). It catalyses the reaction a 1,2-diacyl-sn-glycero-3-phosphate + H2O = a 1,2-diacyl-sn-glycerol + phosphate. The enzyme catalyses di-trans,octa-cis-undecaprenyl diphosphate + H2O = di-trans,octa-cis-undecaprenyl phosphate + phosphate + H(+). It participates in phospholipid metabolism; phosphatidylglycerol biosynthesis; phosphatidylglycerol from CDP-diacylglycerol: step 2/2. Its function is as follows. Catalyzes the dephosphorylation of diacylglycerol diphosphate (DGPP) to phosphatidate (PA) and the subsequent dephosphorylation of PA to diacylglycerol (DAG). Also has undecaprenyl pyrophosphate phosphatase activity, required for the biosynthesis of the lipid carrier undecaprenyl phosphate. Can also use lysophosphatidic acid (LPA) and phosphatidylglycerophosphate as substrates. The pattern of activities varies according to subcellular location, PGP phosphatase activity is higher in the cytoplasmic membrane, whereas PA and LPA phosphatase activities are higher in the outer membrane. Activity is independent of a divalent cation ion and insensitive to inhibition by N-ethylmaleimide. This is Phosphatidylglycerophosphatase B (pgpB) from Haemophilus influenzae (strain ATCC 51907 / DSM 11121 / KW20 / Rd).